An 878-amino-acid polypeptide reads, in one-letter code: Alanine--tRNA ligase (878 aa).

H570, H574, C672, and H676 together coordinate Zn(2+). The segment at 844-864 (GGKGGGGRPDMAQAGGPDASA) is disordered. The segment covering 855–864 (AQAGGPDASA) has biased composition (low complexity).

The protein belongs to the class-II aminoacyl-tRNA synthetase family. Zn(2+) serves as cofactor.

It is found in the cytoplasm. The enzyme catalyses tRNA(Ala) + L-alanine + ATP = L-alanyl-tRNA(Ala) + AMP + diphosphate. Its function is as follows. Catalyzes the attachment of alanine to tRNA(Ala) in a two-step reaction: alanine is first activated by ATP to form Ala-AMP and then transferred to the acceptor end of tRNA(Ala). Also edits incorrectly charged Ser-tRNA(Ala) and Gly-tRNA(Ala) via its editing domain. The polypeptide is Alanine--tRNA ligase (Paramagnetospirillum magneticum (strain ATCC 700264 / AMB-1) (Magnetospirillum magneticum)).